Consider the following 275-residue polypeptide: Elongation factor Ts (275 aa).

The interval 76–79 is involved in Mg(2+) ion dislocation from EF-Tu; it reads TDFV.

This sequence belongs to the EF-Ts family.

The protein localises to the cytoplasm. Functionally, associates with the EF-Tu.GDP complex and induces the exchange of GDP to GTP. It remains bound to the aminoacyl-tRNA.EF-Tu.GTP complex up to the GTP hydrolysis stage on the ribosome. The polypeptide is Elongation factor Ts (Corynebacterium diphtheriae (strain ATCC 700971 / NCTC 13129 / Biotype gravis)).